The following is a 443-amino-acid chain: Alpha-amylase (443 aa).

The first 24 residues, 1–24, serve as a signal peptide directing secretion; that stretch reads MHNTLFRTALLAAALGSFSHTASA. Substrate contacts are provided by His-114 and Arg-196. Asp-198 functions as the Nucleophile in the catalytic mechanism. 201–202 lines the substrate pocket; the sequence is KH. Glu-223 (proton donor) is an active-site residue. The substrate site is built by Gly-228 and His-287.

Belongs to the glycosyl hydrolase 13 family.

The protein resides in the secreted. The catalysed reaction is Endohydrolysis of (1-&gt;4)-alpha-D-glucosidic linkages in polysaccharides containing three or more (1-&gt;4)-alpha-linked D-glucose units.. The polypeptide is Alpha-amylase (amyA) (Aeromonas hydrophila).